The chain runs to 126 residues: Nascent polypeptide-associated complex protein (126 aa).

The NAC-A/B domain maps to 10-77 (PRMMKQMQKM…AKKVAKAEEK (68 aa)).

It belongs to the NAC-alpha family. As to quaternary structure, homodimer. Interacts with the ribosome. Binds ribosomal RNA.

In terms of biological role, contacts the emerging nascent chain on the ribosome. In Methanococcus maripaludis (strain C5 / ATCC BAA-1333), this protein is Nascent polypeptide-associated complex protein.